The primary structure comprises 294 residues: Agamous-like MADS-box protein AGL82 (294 aa).

The region spanning 1–51 (MVPKVVDLQRIANDKTRITTYKKRKASLYKKAQEFSTLCGVETCLIVYGPT) is the MADS-box domain.

As to quaternary structure, interacts with MEE14/CBP1.

The protein resides in the nucleus. Its function is as follows. Probable transcription factor that may function in the maintenance of the proper function of the central cell in pollen tube attraction. This Arabidopsis thaliana (Mouse-ear cress) protein is Agamous-like MADS-box protein AGL82.